Reading from the N-terminus, the 188-residue chain is Elongation factor P-like protein (188 aa).

Belongs to the elongation factor P family.

The chain is Elongation factor P-like protein from Xylella fastidiosa (strain M23).